Here is a 907-residue protein sequence, read N- to C-terminus: Envelope glycoprotein B (907 aa).

The signal sequence occupies residues 1–24 (MESRIWCLVVCVNLCIVCLGAAVS). Topologically, residues 25–751 (SSSTRGTSAT…EGVATFLKNP (727 aa)) are virion surface. A disordered region spans residues 29–62 (RGTSATHSHHSSHTTSAAHSRSGSVSQRVTSSQT). Over residues 41–62 (HTTSAAHSRSGSVSQRVTSSQT) the composition is skewed to low complexity. 3 N-linked (GlcNAc...) asparagine; by host glycosylation sites follow: asparagine 68, asparagine 73, and asparagine 85. 4 disulfide bridges follow: cysteine 94–cysteine 551, cysteine 111–cysteine 507, cysteine 185–cysteine 250, and cysteine 344–cysteine 391. The interval 152–158 (SYAYIHT) is involved in fusion and/or binding to host membrane. N-linked (GlcNAc...) asparagine; by host glycosylation occurs at asparagine 208. Residues 237-244 (GSTWLYRE) form an involved in fusion and/or binding to host membrane region. 14 N-linked (GlcNAc...) asparagine; by host glycosylation sites follow: asparagine 281, asparagine 286, asparagine 302, asparagine 341, asparagine 383, asparagine 405, asparagine 409, asparagine 417, asparagine 447, asparagine 452, asparagine 456, asparagine 466, asparagine 555, and asparagine 586. Cysteine 574 and cysteine 611 are oxidised to a cystine. The hydrophobic membrane proximal region stretch occupies residues 697–749 (VEDKVVDPLPPYLKGLDDLMSGLGAAGKAVGVAIGAVGGAVASVVEGVATFLK). Residues 752 to 772 (FGAFTIILVAIAVVIITYLIY) traverse the membrane as a helical segment. The Intravirion portion of the chain corresponds to 773-907 (TRQRRLCTQP…LKDSDEEENV (135 aa)). Polar residues-rich tracts occupy residues 798 to 810 (VTSG…SLQA) and 860 to 877 (RAQQ…GTQD). 2 disordered regions span residues 798–838 (VTSG…TAAP) and 857–907 (AEQR…EENV). A compositionally biased stretch (basic and acidic residues) spans 878 to 887 (KGQKPNLLDR). The short motif at 895 to 898 (YRHL) is the Internalization motif element.

It belongs to the herpesviridae glycoprotein B family. Homotrimer; disulfide-linked. Binds to heparan sulfate proteoglycans. Interacts with gH/gL heterodimer. Post-translationally, a proteolytic cleavage by host furin generates two subunits that remain linked by disulfide bonds.

Its subcellular location is the virion membrane. The protein resides in the host cell membrane. It localises to the host endosome membrane. The protein localises to the host Golgi apparatus membrane. Its function is as follows. Envelope glycoprotein that forms spikes at the surface of virion envelope. Essential for the initial attachment to heparan sulfate moieties of the host cell surface proteoglycans. Involved in fusion of viral and cellular membranes leading to virus entry into the host cell. Following initial binding to its host receptors, membrane fusion is mediated by the fusion machinery composed at least of gB and the heterodimer gH/gL. May be involved in the fusion between the virion envelope and the outer nuclear membrane during virion egress. The polypeptide is Envelope glycoprotein B (Human cytomegalovirus (strain Merlin) (HHV-5)).